Here is a 630-residue protein sequence, read N- to C-terminus: Probable potassium transport system protein Kup 1 (630 aa).

Helical transmembrane passes span 15–35 (FAALALAALGVVYGDIGTSPL), 59–79 (LSLIFWALVIVVSVKYVTFIM), 109–129 (WIMIVGVLGAAMFYGDGMVTP), 145–165 (PALKPFVIPLTMVVLFILFFV), 173–193 (VGAFFGPVMLVWFSALALLGV), 223–243 (LVAMGNVVLAVTGAEALYADM), 255–275 (WFAFVLPALVLNYFGQGALIL), 297–317 (LVGLATLATVIASQAVISGAF), 345–365 (IYLPAVNWGLMVAVMILVLGF), 374–394 (AYGIAVTGDMVITSILATVVV), 405–425 (AGLLFACFLSVELVFLAANIL), and 427–447 (IPDGGWFPLVAGMGVFVLMTT).

The protein belongs to the HAK/KUP transporter (TC 2.A.72) family.

It localises to the cell inner membrane. It catalyses the reaction K(+)(in) + H(+)(in) = K(+)(out) + H(+)(out). In terms of biological role, transport of potassium into the cell. Likely operates as a K(+):H(+) symporter. The chain is Probable potassium transport system protein Kup 1 from Dechloromonas aromatica (strain RCB).